Here is a 190-residue protein sequence, read N- to C-terminus: Lipid A acyltransferase PagP (190 aa).

The N-terminal stretch at 1–18 (MKRLISCLTIICALNASA) is a signal peptide. Residues His60, Asp103, and Ser104 contribute to the active site.

It belongs to the lipid A palmitoyltransferase family. As to quaternary structure, homodimer.

It is found in the cell outer membrane. The catalysed reaction is a lipid A + a 1,2-diacyl-sn-glycero-3-phosphocholine = a hepta-acyl lipid A + a 2-acyl-sn-glycero-3-phosphocholine. The enzyme catalyses a lipid IVA + a 1,2-diacyl-sn-glycero-3-phosphocholine = a lipid IVB + a 2-acyl-sn-glycero-3-phosphocholine. It carries out the reaction a lipid IIA + a 1,2-diacyl-sn-glycero-3-phosphocholine = a lipid IIB + a 2-acyl-sn-glycero-3-phosphocholine. Its function is as follows. Transfers a fatty acid residue from the sn-1 position of a phospholipid to the N-linked hydroxyfatty acid chain on the proximal unit of lipid A or its precursors. The polypeptide is Lipid A acyltransferase PagP (Legionella pneumophila subsp. pneumophila (strain Philadelphia 1 / ATCC 33152 / DSM 7513)).